Consider the following 747-residue polypeptide: Protein neuralized (747 aa).

Residues 97 to 251 (PLQFHTVHGD…NCTGIEFLDA (155 aa)) form the NHR 1 domain. The segment covering 280–292 (LPQQQQQLPQQQL) has biased composition (low complexity). Positions 280–309 (LPQQQQQLPQQQLTAHHPLQQSRRSLPGGT) are disordered. In terms of domain architecture, NHR 2 spans 359 to 514 (PVPFHITKGR…STQSLRMFRQ (156 aa)). The RING-type zinc finger occupies 694 to 735 (CTICYENPIDSVLYMCGHMCMCYDCAIEQWRGVGGGQCPLCR).

It localises to the nucleus. Its function is as follows. Involved in neurogenesis. Interacts with other neurogenic proteins in the specification of the neuroblast versus epidermoblast cell fate. The polypeptide is Protein neuralized (neur) (Drosophila virilis (Fruit fly)).